A 66-amino-acid chain; its full sequence is KEGYLVELGTGCKYECFKLGDNDYCLRECKARYGKGAGGYCYAFGCWCTQLYEQAVVWPLKNKTCR.

An LCN-type CS-alpha/beta domain is found at 1 to 66 (KEGYLVELGT…VWPLKNKTCR (66 aa)). Cystine bridges form between cysteine 12/cysteine 65, cysteine 16/cysteine 41, cysteine 25/cysteine 46, and cysteine 29/cysteine 48.

This sequence belongs to the long (4 C-C) scorpion toxin superfamily. Sodium channel inhibitor family. Beta subfamily. Expressed by the venom gland.

The protein resides in the secreted. Functionally, beta toxins bind voltage-independently at site-4 of sodium channels (Nav) and shift the voltage of activation toward more negative potentials thereby affecting sodium channel activation and promoting spontaneous and repetitive firing. Acts on human sodium channel Nav1.6/SCN8A. In Centruroides huichol (Scorpion), this protein is Beta-toxin Chui3.